We begin with the raw amino-acid sequence, 264 residues long: COP9 signalosome complex subunit 7b (264 aa).

Residue Ala2 is modified to N-acetylalanine. Residues 2–159 enclose the PCI domain; the sequence is AGEQKPSSNL…QLLEVDFCIG (158 aa). Residues 188 to 237 are a coiled coil; it reads IEQQVLRANQYKENHNRTQQQVEAEVTNIKKTLKATASSSAQEMEQQLAE. The segment covering 223–232 has biased composition (polar residues); it reads TASSSAQEME. The tract at residues 223–264 is disordered; sequence TASSSAQEMEQQLAERECPPHAEQRQPTKKMSKVKGLVSSRH. Over residues 235–248 the composition is skewed to basic and acidic residues; the sequence is LAERECPPHAEQRQ. Phosphothreonine is present on Ser261. At Arg263 the chain carries Phosphoserine.

It belongs to the CSN7/EIF3M family. CSN7 subfamily. As to quaternary structure, component of the CSN complex, composed of COPS1/GPS1, COPS2, COPS3, COPS4, COPS5, COPS6, COPS7 (COPS7A or COPS7B), COPS8 and COPS9 isoform 1. In the complex, it probably interacts directly with COPS1, COPS2, COPS4, COPS5, COPS6 and COPS8. Interacts with EIF3S6. In terms of assembly, (Microbial infection) Interacts with vaccinia virus protein C9L.

It is found in the cytoplasm. The protein localises to the nucleus. Its function is as follows. Component of the COP9 signalosome complex (CSN), a complex involved in various cellular and developmental processes. The CSN complex is an essential regulator of the ubiquitin (Ubl) conjugation pathway by mediating the deneddylation of the cullin subunits of SCF-type E3 ligase complexes, leading to decrease the Ubl ligase activity of SCF-type complexes such as SCF, CSA or DDB2. The complex is also involved in phosphorylation of p53/TP53, JUN, I-kappa-B-alpha/NFKBIA, ITPK1 and IRF8/ICSBP, possibly via its association with CK2 and PKD kinases. CSN-dependent phosphorylation of TP53 and JUN promotes and protects degradation by the Ubl system, respectively. This is COP9 signalosome complex subunit 7b (COPS7B) from Homo sapiens (Human).